Here is a 369-residue protein sequence, read N- to C-terminus: tRNA 2-selenouridine synthase (369 aa).

The region spanning 15-138 (FIAGQPLIDL…MRQYLIGVIE (124 aa)) is the Rhodanese domain. The S-selanylcysteine intermediate role is filled by Cys98.

The protein belongs to the SelU family. In terms of assembly, monomer.

It carries out the reaction 5-methylaminomethyl-2-thiouridine(34) in tRNA + selenophosphate + (2E)-geranyl diphosphate + H2O + H(+) = 5-methylaminomethyl-2-selenouridine(34) in tRNA + (2E)-thiogeraniol + phosphate + diphosphate. The catalysed reaction is 5-methylaminomethyl-2-thiouridine(34) in tRNA + (2E)-geranyl diphosphate = 5-methylaminomethyl-S-(2E)-geranyl-thiouridine(34) in tRNA + diphosphate. It catalyses the reaction 5-methylaminomethyl-S-(2E)-geranyl-thiouridine(34) in tRNA + selenophosphate + H(+) = 5-methylaminomethyl-2-(Se-phospho)selenouridine(34) in tRNA + (2E)-thiogeraniol. The enzyme catalyses 5-methylaminomethyl-2-(Se-phospho)selenouridine(34) in tRNA + H2O = 5-methylaminomethyl-2-selenouridine(34) in tRNA + phosphate. Involved in the post-transcriptional modification of the uridine at the wobble position (U34) of tRNA(Lys), tRNA(Glu) and tRNA(Gln). Catalyzes the conversion of 2-thiouridine (S2U-RNA) to 2-selenouridine (Se2U-RNA). Acts in a two-step process involving geranylation of 2-thiouridine (S2U) to S-geranyl-2-thiouridine (geS2U) and subsequent selenation of the latter derivative to 2-selenouridine (Se2U) in the tRNA chain. This chain is tRNA 2-selenouridine synthase, found in Shewanella sp. (strain MR-7).